Reading from the N-terminus, the 379-residue chain is MGSLGISEIYDKNSFNEMEFEFDPSAPPPFRLAEIRNVIPKHCWVKDPLRSLSYVVRDVIFVATLIGIAIHLDSWLFYPLYWAIQGTMFWAIFVLGHDCGHGSFSDSQLLNNVVGHILHSAILVPYHGWRISHKTHHQNHGNVETDESWVPMPEKLYNKVGYSTKFLRYKIPFPLLAYPMYLMKRSPGKSGSHFNPYSDLFQPHERKYVVTSTLCWTVMAALLLYLCTAFGSLQMFKIYGAPYLIFVMWLDFVTYLHHHGYEKKLPWYRGKEWSYLRGGLTTVDRDYGLFNNIHHDIGTHVIHHLFPQIPHYHLREATKAAKPVLGKYYREPKKSGPIPFHLVKDLTRSMKQDHYVSDSGEIVFYQTDPHIFRSAPKDE.

A helical membrane pass occupies residues 52 to 72; that stretch reads LSYVVRDVIFVATLIGIAIHL. Positions 97-101 match the Histidine box-1 motif; the sequence is HDCGH. Positions 133–137 match the Histidine box-2 motif; the sequence is HKTHH. The next 2 membrane-spanning stretches (helical) occupy residues 213 to 233 and 236 to 256; these read TLCW…FGSL and FKIY…VTYL. A Histidine box-3 motif is present at residues 300–304; that stretch reads HVIHH.

Belongs to the fatty acid desaturase type 1 family.

The protein localises to the endoplasmic reticulum membrane. It participates in lipid metabolism; polyunsaturated fatty acid biosynthesis. ER (microsomal) omega-3 fatty acid desaturase introduces the third double bond in the biosynthesis of 18:3 fatty acids, important constituents of plant membranes. It is thought to use cytochrome b5 as an electron donor and to act on fatty acids esterified to phosphatidylcholine and, possibly, other phospholipids. The polypeptide is Omega-3 fatty acid desaturase, endoplasmic reticulum (FAD3) (Nicotiana tabacum (Common tobacco)).